The following is a 216-amino-acid chain: Sugar fermentation stimulation protein homolog (216 aa).

It belongs to the SfsA family.

This chain is Sugar fermentation stimulation protein homolog, found in Thermoplasma volcanium (strain ATCC 51530 / DSM 4299 / JCM 9571 / NBRC 15438 / GSS1).